The sequence spans 181 residues: Large ribosomal subunit protein uL5 (181 aa).

This sequence belongs to the universal ribosomal protein uL5 family. Part of the 50S ribosomal subunit; part of the 5S rRNA/L5/L18/L25 subcomplex. Contacts the 5S rRNA and the P site tRNA. Forms a bridge to the 30S subunit in the 70S ribosome.

Its function is as follows. This is one of the proteins that bind and probably mediate the attachment of the 5S RNA into the large ribosomal subunit, where it forms part of the central protuberance. In the 70S ribosome it contacts protein S13 of the 30S subunit (bridge B1b), connecting the 2 subunits; this bridge is implicated in subunit movement. Contacts the P site tRNA; the 5S rRNA and some of its associated proteins might help stabilize positioning of ribosome-bound tRNAs. This is Large ribosomal subunit protein uL5 from Helicobacter pylori (strain Shi470).